A 541-amino-acid chain; its full sequence is Arginine--tRNA ligase (541 aa).

Residues 119 to 129 (ANPTGPLHIGH) carry the 'HIGH' region motif.

Belongs to the class-I aminoacyl-tRNA synthetase family. As to quaternary structure, monomer.

The protein localises to the cytoplasm. The catalysed reaction is tRNA(Arg) + L-arginine + ATP = L-arginyl-tRNA(Arg) + AMP + diphosphate. The sequence is that of Arginine--tRNA ligase from Helicobacter pylori (strain G27).